The chain runs to 95 residues: Aspartyl/glutamyl-tRNA(Asn/Gln) amidotransferase subunit C (95 aa).

The protein belongs to the GatC family. In terms of assembly, heterotrimer of A, B and C subunits.

It carries out the reaction L-glutamyl-tRNA(Gln) + L-glutamine + ATP + H2O = L-glutaminyl-tRNA(Gln) + L-glutamate + ADP + phosphate + H(+). It catalyses the reaction L-aspartyl-tRNA(Asn) + L-glutamine + ATP + H2O = L-asparaginyl-tRNA(Asn) + L-glutamate + ADP + phosphate + 2 H(+). Allows the formation of correctly charged Asn-tRNA(Asn) or Gln-tRNA(Gln) through the transamidation of misacylated Asp-tRNA(Asn) or Glu-tRNA(Gln) in organisms which lack either or both of asparaginyl-tRNA or glutaminyl-tRNA synthetases. The reaction takes place in the presence of glutamine and ATP through an activated phospho-Asp-tRNA(Asn) or phospho-Glu-tRNA(Gln). The chain is Aspartyl/glutamyl-tRNA(Asn/Gln) amidotransferase subunit C from Campylobacter fetus subsp. fetus (strain 82-40).